The following is a 397-amino-acid chain: Putative gustatory receptor 85a (397 aa).

The Cytoplasmic segment spans residues 1-56 (MYSLIEAQLLGGKLVNRVMASLRRIIQRSLGYFCALNGILDFNTDIGTGNLRRYRV). A helical transmembrane segment spans residues 57–77 (LFMYRLLHNFAVISLTLKFLF). At 78-90 (DFTDHFKYIESST) the chain is on the extracellular side. Residues 91–111 (LITVNFFTYFTLVFFALLSSM) traverse the membrane as a helical segment. The Cytoplasmic segment spans residues 112 to 151 (GSCYQWQNRILAVLKELKHQRDLSRHMGYRVPRSKQNSID). The chain crosses the membrane as a helical span at residues 152-172 (YLLFALTVLLILRLSIHLATF). Residues 173–186 (TLSARMGFNHPCNC) lie on the Extracellular side of the membrane. The chain crosses the membrane as a helical span at residues 187–207 (FLPECMIFSMNYLLFAILAEI). Residues 208–268 (TRCWWSLQSG…RYVTLAYMAR (61 aa)) are Cytoplasmic-facing. Residues 269-289 (NLWSGIVAGYLLVRFVIGNGL) traverse the membrane as a helical segment. At 290–293 (QDVE) the chain is on the extracellular side. A helical membrane pass occupies residues 294–314 (LVYLVFSFITCIQPLMLSLLV). Topologically, residues 315-375 (NSMTSTTGSL…FRINRSLAFR (61 aa)) are cytoplasmic. A helical membrane pass occupies residues 376-396 (SASLILVHVLYMVQSDYISIT). Asparagine 397 is a topological domain (extracellular).

Belongs to the insect chemoreceptor superfamily. Gustatory receptor (GR) family. Gr22e subfamily.

The protein localises to the cell membrane. In terms of biological role, probable gustatory receptor which mediates acceptance or avoidance behavior, depending on its substrates. This is Putative gustatory receptor 85a (Gr85a) from Drosophila melanogaster (Fruit fly).